The following is a 474-amino-acid chain: Polyamine oxidase 7 (474 aa).

A signal peptide spans 1–27 (MTKPTTMAIFLSIVLLSMAQLPSLVAG). 2 residues coordinate FAD: Glu-61 and Arg-69. 2 N-linked (GlcNAc...) asparagine glycosylation sites follow: Asn-103 and Asn-150. Val-261 is an FAD binding site. An N-linked (GlcNAc...) asparagine glycan is attached at Asn-278. Glu-454 contacts FAD.

It belongs to the flavin monoamine oxidase family. Requires FAD as cofactor.

Its subcellular location is the secreted. The protein resides in the extracellular space. The protein localises to the apoplast. It carries out the reaction spermine + O2 + H2O = 3-aminopropanal + spermidine + H2O2. The enzyme catalyses N(1)-acetylspermine + O2 + H2O = 3-acetamidopropanal + spermidine + H2O2. The catalysed reaction is norspermine + O2 + H2O = norspermidine + 3-aminopropanal + H2O2. It catalyses the reaction spermidine + O2 + H2O = 3-aminopropanal + putrescine + H2O2. It carries out the reaction N(1)-acetylspermidine + O2 + H2O = 3-acetamidopropanal + putrescine + H2O2. The enzyme catalyses thermospermine + O2 + H2O = 3-aminopropanal + spermidine + H2O2. Its pathway is amine and polyamine degradation; spermidine degradation. It participates in amine and polyamine degradation; spermine degradation. In terms of biological role, flavoenzyme involved in polyamine back-conversion. Catalyzes the oxidation of the secondary amino group of polyamines, such as spermine, spermidine and their acetyl derivatives. Substrate preference is spermine &gt; spermidine &gt; N(1)-acetylspermine &gt; N(1)-acetylspermidine &gt; norspermine &gt; thermospermine. No activity detected when putrescine is used as substrate. May play a role in producing hydrogen peroxide for secondary wall thickening through lignin formation during anther development. This chain is Polyamine oxidase 7, found in Oryza sativa subsp. japonica (Rice).